Reading from the N-terminus, the 266-residue chain is Type II pantothenate kinase (266 aa).

Residue 6–13 (DAGGTLIK) coordinates ATP. The active-site Proton acceptor is the Glu70. Residues Thr99, 121-125 (GGMIQ), Tyr137, and Ser225 contribute to the ATP site.

The protein belongs to the type II pantothenate kinase family. As to quaternary structure, homodimer.

The protein localises to the cytoplasm. It catalyses the reaction (R)-pantothenate + ATP = (R)-4'-phosphopantothenate + ADP + H(+). The protein operates within cofactor biosynthesis; coenzyme A biosynthesis; CoA from (R)-pantothenate: step 1/5. In terms of biological role, catalyzes the phosphorylation of pantothenate (Pan), the first step in CoA biosynthesis. In Staphylococcus haemolyticus (strain JCSC1435), this protein is Type II pantothenate kinase.